We begin with the raw amino-acid sequence, 290 residues long: MSVSVSVDAETNVVGLIGHPVEHSLSPAMHNAAFKELGLNYVYLAFDVPPERLEGAVRGAADLGIVGLNVTIPHKEAVMELCDELDRDAELIGAVNTVRFSRGKIEGFNTDGEGFLRALREETYFDPRGTKSVILGAGGAARAVSFKLATEGADEIVIANRTVDRAERLAEELKEKVGVKARAIGLDGDEIERELRDADLLVDATPVGMYPNEDEPPLVTADQMHEDLIVNDLVYNPPRTRLLEEAEKAGATPVSGVGMLVYQGALAFELWTGEEAPVEVMREAVLEHLR.

Shikimate-binding positions include 24–26 (SLS) and Thr71. Catalysis depends on Lys75, which acts as the Proton acceptor. Residues Asn96 and Asp111 each coordinate shikimate. Residues 136-140 (GAGGA), 160-165 (NRTVDR), and Leu233 contribute to the NADP(+) site. Tyr235 provides a ligand contact to shikimate. Residue Gly256 coordinates NADP(+).

Belongs to the shikimate dehydrogenase family. In terms of assembly, homodimer.

It carries out the reaction shikimate + NADP(+) = 3-dehydroshikimate + NADPH + H(+). It functions in the pathway metabolic intermediate biosynthesis; chorismate biosynthesis; chorismate from D-erythrose 4-phosphate and phosphoenolpyruvate: step 4/7. In terms of biological role, involved in the biosynthesis of the chorismate, which leads to the biosynthesis of aromatic amino acids. Catalyzes the reversible NADPH linked reduction of 3-dehydroshikimate (DHSA) to yield shikimate (SA). The protein is Shikimate dehydrogenase (NADP(+)) of Methanopyrus kandleri (strain AV19 / DSM 6324 / JCM 9639 / NBRC 100938).